The primary structure comprises 361 residues: Histidine biosynthesis bifunctional protein HisB (361 aa).

Positions 1-172 (MTQPTLFIDR…PKTTACKRPP (172 aa)) are histidinol-phosphatase. Asp9 acts as the Nucleophile in catalysis. Mg(2+)-binding residues include Asp9 and Asp11. Catalysis depends on Asp11, which acts as the Proton donor. Zn(2+)-binding residues include Cys92, His94, Cys100, and Cys102. Asp129 is a binding site for Mg(2+). The interval 173-361 (RYAEVVRTTK…NELPSSKGVL (189 aa)) is imidazoleglycerol-phosphate dehydratase.

It in the N-terminal section; belongs to the histidinol-phosphatase family. This sequence in the C-terminal section; belongs to the imidazoleglycerol-phosphate dehydratase family. It depends on Mg(2+) as a cofactor. Zn(2+) serves as cofactor.

Its subcellular location is the cytoplasm. It carries out the reaction D-erythro-1-(imidazol-4-yl)glycerol 3-phosphate = 3-(imidazol-4-yl)-2-oxopropyl phosphate + H2O. It catalyses the reaction L-histidinol phosphate + H2O = L-histidinol + phosphate. It functions in the pathway amino-acid biosynthesis; L-histidine biosynthesis; L-histidine from 5-phospho-alpha-D-ribose 1-diphosphate: step 6/9. It participates in amino-acid biosynthesis; L-histidine biosynthesis; L-histidine from 5-phospho-alpha-D-ribose 1-diphosphate: step 8/9. This chain is Histidine biosynthesis bifunctional protein HisB, found in Actinobacillus pleuropneumoniae serotype 3 (strain JL03).